The primary structure comprises 278 residues: MSAEKSDKAKISAQIKHVPKDAQVIMSILKELNVQEYEPRVVNQLLEFTFRYVTCILDDAKVYANHARKKTIDLDDVRLATEVTLDKSFTGPLERHVLAKVADVRNSMPLPPIKPHCGLRLPPDRYCLTGVNYKLRATNQPKKMTKSAVEGRPLKTVVKPVSSANGPKRPHSVVAKQQVVTIPKPVIKFTTTTTTKTVGSSGGSGGGGGQEVKSESTGAGGDLKMEVDSDAAAVGSIAGASGSGAGSASGGGGGGGSSGVGVAVKREREEEEFEFVTN.

Residues 193–278 (TTTKTVGSSG…EEEEFEFVTN (86 aa)) form a disordered region. Residues 200–210 (SSGGSGGGGGQ) show a composition bias toward gly residues. The segment covering 231–240 (AAAVGSIAGA) has biased composition (low complexity). Over residues 241–259 (SGSGAGSASGGGGGGGSSG) the composition is skewed to gly residues. Residues 269–278 (EEEEFEFVTN) are compositionally biased toward acidic residues.

The protein belongs to the TAF9 family. Belongs to the TFIID complex which is composed of TATA binding protein (Tbp) and a number of TBP-associated factors (TAFs). Taf9 and Taf6 exist as a heterotetramer. Interacts with e(y)2.

Its subcellular location is the nucleus. In terms of biological role, TFIID is a multimeric protein complex that plays a central role in mediating promoter responses to various activators and repressors. The polypeptide is Transcription initiation factor TFIID subunit 9 (Drosophila melanogaster (Fruit fly)).